Here is a 100-residue protein sequence, read N- to C-terminus: Small ribosomal subunit protein uS14c (100 aa).

It belongs to the universal ribosomal protein uS14 family. In terms of assembly, part of the 30S ribosomal subunit.

Its subcellular location is the plastid. The protein resides in the chloroplast. Functionally, binds 16S rRNA, required for the assembly of 30S particles. The protein is Small ribosomal subunit protein uS14c of Trieres chinensis (Marine centric diatom).